The chain runs to 177 residues: Endoribonuclease YbeY (177 aa).

Residues His-114, His-118, and His-124 each contribute to the Zn(2+) site. The interval 154–177 is disordered; it reads SYPEAIPTNPAPRRQASSSAGHIE. Residues 168 to 177 show a composition bias toward polar residues; sequence QASSSAGHIE.

This sequence belongs to the endoribonuclease YbeY family. The cofactor is Zn(2+).

It localises to the cytoplasm. In terms of biological role, single strand-specific metallo-endoribonuclease involved in late-stage 70S ribosome quality control and in maturation of the 3' terminus of the 16S rRNA. In Cellvibrio japonicus (strain Ueda107) (Pseudomonas fluorescens subsp. cellulosa), this protein is Endoribonuclease YbeY.